The chain runs to 259 residues: Global transcriptional regulator CodY (259 aa).

Positions 1 to 155 are GAF domain; that stretch reads MNLLEKTRKI…GATVVGMEIL (155 aa). Positions 203–222 form a DNA-binding region, H-T-H motif; it reads ASKIADRVGITRSVIVNALR. Ser-215 carries the post-translational modification Phosphoserine.

This sequence belongs to the CodY family.

Its subcellular location is the cytoplasm. DNA-binding global transcriptional regulator which is involved in the adaptive response to starvation and acts by directly or indirectly controlling the expression of numerous genes in response to nutrient availability. During rapid exponential growth, CodY is highly active and represses genes whose products allow adaptation to nutrient depletion. The protein is Global transcriptional regulator CodY of Lysinibacillus sphaericus (strain C3-41).